A 39-amino-acid chain; its full sequence is Photosystem II reaction center protein Psb30 (39 aa).

The helical transmembrane segment at 12 to 32 (IFQLTFVALIMLAGPFVIFLL) threads the bilayer.

The protein belongs to the Psb30/Ycf12 family. In terms of assembly, PSII is composed of 1 copy each of membrane proteins PsbA, PsbB, PsbC, PsbD, PsbE, PsbF, PsbH, PsbI, PsbJ, PsbK, PsbL, PsbM, PsbT, PsbX, PsbY, PsbZ, Psb30/Ycf12, peripheral proteins PsbO, CyanoQ (PsbQ), PsbU, PsbV and a large number of cofactors. It forms dimeric complexes.

The protein resides in the cellular thylakoid membrane. Its function is as follows. A core subunit of photosystem II (PSII), probably helps stabilize the reaction center. This Microcystis aeruginosa (strain NIES-843 / IAM M-2473) protein is Photosystem II reaction center protein Psb30.